The following is a 229-amino-acid chain: Cilia- and flagella-associated protein 95 (229 aa).

Residues 1-123 (MDSLDRSCQD…LLNEETVSSG (123 aa)) lie on the Extracellular side of the membrane. N-linked (GlcNAc...) asparagine glycosylation occurs at Asn-75. The chain crosses the membrane as a helical span at residues 124 to 140 (IIERVTGLPATGFGAVF). At 141-229 (PRHPPDWSKM…PLTSGPIVPI (89 aa)) the chain is on the cytoplasmic side. The segment at 153–163 (LTTYSEDYVPP) is mn.

As to quaternary structure, microtubule inner protein component of sperm flagellar doublet microtubules. Interacts with MYH9. Interacts with MYH10. In terms of tissue distribution, expressed in undifferentiated embryonic stem cells. Expressed in airway epithelial cells.

The protein resides in the cytoplasm. The protein localises to the cytoskeleton. It localises to the cilium axoneme. Its subcellular location is the flagellum axoneme. It is found in the cell membrane. Microtubule inner protein (MIP) part of the dynein-decorated doublet microtubules (DMTs) in cilia axoneme, which is required for motile cilia beating. This is Cilia- and flagella-associated protein 95 from Homo sapiens (Human).